Here is a 283-residue protein sequence, read N- to C-terminus: Phosphate import ATP-binding protein PstB (283 aa).

The segment covering 1–20 (MAQTLAQTKQISQSHTFDVS) has biased composition (polar residues). A disordered region spans residues 1-33 (MAQTLAQTKQISQSHTFDVSQSHHKTPNDTNSH). One can recognise an ABC transporter domain in the interval 37 to 278 (YSTQNLDLWY…PSNKKTEDYI (242 aa)). 69–76 (GPSGCGKS) lines the ATP pocket.

This sequence belongs to the ABC transporter superfamily. Phosphate importer (TC 3.A.1.7) family. In terms of assembly, the complex is composed of two ATP-binding proteins (PstB), two transmembrane proteins (PstC and PstA) and a solute-binding protein (PstS).

It localises to the cell membrane. The catalysed reaction is phosphate(out) + ATP + H2O = ADP + 2 phosphate(in) + H(+). In terms of biological role, part of the ABC transporter complex PstSACB involved in phosphate import. Responsible for energy coupling to the transport system. This Staphylococcus aureus (strain bovine RF122 / ET3-1) protein is Phosphate import ATP-binding protein PstB.